The sequence spans 242 residues: Phosphoribosylaminoimidazole-succinocarboxamide synthase (242 aa).

It belongs to the SAICAR synthetase family.

It catalyses the reaction 5-amino-1-(5-phospho-D-ribosyl)imidazole-4-carboxylate + L-aspartate + ATP = (2S)-2-[5-amino-1-(5-phospho-beta-D-ribosyl)imidazole-4-carboxamido]succinate + ADP + phosphate + 2 H(+). It participates in purine metabolism; IMP biosynthesis via de novo pathway; 5-amino-1-(5-phospho-D-ribosyl)imidazole-4-carboxamide from 5-amino-1-(5-phospho-D-ribosyl)imidazole-4-carboxylate: step 1/2. This Prochlorococcus marinus (strain MIT 9303) protein is Phosphoribosylaminoimidazole-succinocarboxamide synthase.